Reading from the N-terminus, the 475-residue chain is uncharacterized protein (475 aa).

4Fe-4S ferredoxin-type domains are found at residues 303–333 (ASEF…GHGY) and 352–381 (YKDF…LSKL). [4Fe-4S] cluster is bound by residues C312, C315, C318, C322, C362, C365, C368, and C372.

Belongs to the LutB/YkgF family.

This is an uncharacterized protein from Escherichia coli (strain K12).